A 512-amino-acid chain; its full sequence is MSKKPVMLMILDGFGIAPKSEGNAVTLAKKPNLDKLFEKYPTSQLQASGLAVGLPEGQMGNSEVGHLNIGSGRIVYQELTRITKAIADGDFFENESLKLAMTNAKKTGSSLHLMGLLSDGGVHSHIEHLRGLLEFAKKEEVQNVYVHAFMDGRDVPPSSGQEFIEKTEKMMAEVGVGKIATVSGRYYAMDRDNRWERVELAYNALVLGKGETASSATQAIEKSYHDNKTDEFVLPTVVTENGNPTANIKNGDSVIFFNFRPDRAREITRAINDKEFAGFKRETLDLTFVTMTQYDKTLERVNVAYTPQTLSNTLGEYVSNKGLNQLRIAETEKYAHVTFFFNGGVEKENPGEDRKVIPSPKVATYDLKPEMSAYEVTDELLNRLDSDKYDMVILNFANPDMVGHTGVVEAAVKAIETVDECVGKIADKILEKNGCLFITADHGNAETMIDFSTGNPYTAHTTHEVPFVWVANDTEGKKLSNGKLADIAPTMLVQLGLEVPTEMTGENLIVNK.

Positions 12 and 62 each coordinate Mn(2+). Catalysis depends on Ser-62, which acts as the Phosphoserine intermediate. Substrate is bound by residues His-123, 153 to 154 (RD), Arg-185, Arg-191, 260 to 263 (RPDR), and Lys-333. Asp-400, His-404, Asp-441, His-442, and His-460 together coordinate Mn(2+).

This sequence belongs to the BPG-independent phosphoglycerate mutase family. In terms of assembly, monomer. Mn(2+) is required as a cofactor.

The enzyme catalyses (2R)-2-phosphoglycerate = (2R)-3-phosphoglycerate. It participates in carbohydrate degradation; glycolysis; pyruvate from D-glyceraldehyde 3-phosphate: step 3/5. Its function is as follows. Catalyzes the interconversion of 2-phosphoglycerate and 3-phosphoglycerate. In Clostridium beijerinckii (strain ATCC 51743 / NCIMB 8052) (Clostridium acetobutylicum), this protein is 2,3-bisphosphoglycerate-independent phosphoglycerate mutase.